The chain runs to 227 residues: Prolactin (227 aa).

The N-terminal stretch at 1-28 is a signal peptide; that stretch reads MDSKWSRRTGSLLLLLVSNLLLCKSTAS. Cysteines 32 and 39 form a disulfide. Phosphoserine occurs at positions 54, 62, and 118. Cystine bridges form between Cys86–Cys202 and Cys219–Cys227.

The protein belongs to the somatotropin/prolactin family. As to quaternary structure, interacts with PRLR.

Its subcellular location is the secreted. In terms of biological role, prolactin acts primarily on the mammary gland by promoting lactation. The chain is Prolactin (PRL) from Oryctolagus cuniculus (Rabbit).